A 296-amino-acid chain; its full sequence is Probable AP endonuclease (296 aa).

The cysteines at positions 16 and 20 are disulfide-linked. Residues H78, H115, E142, H182, H218, D231, H233, and E271 each coordinate Zn(2+).

This sequence belongs to the AP endonuclease 2 family. Zn(2+) is required as a cofactor.

The protein resides in the host nucleus. It is found in the host cytoplasm. Its subcellular location is the virion. Its function is as follows. Endonuclease of the viral base excision repair system that catalyzes DNA cleavage reaction at the apurinic or apyrimidinic sites (AP sites). Cleaves phosphodiester bonds on the 5' side of AP sites. In addition to endonuclease activity, the AP endonuclease has a proofreading 3'-5' exonuclease activity that is considerably more efficient in the elimination of a mismatch than in that of a correctly paired base. Displays 3'-phosphatase and 3'-repair diesterase activities. The single nucleotide gaps generated by the AP endonuclease are filled by the viral repair DNA polymerase X and the DNA ligase. This Ornithodoros (relapsing fever ticks) protein is Probable AP endonuclease.